The chain runs to 384 residues: Deoxyguanosinetriphosphate triphosphohydrolase-like protein (384 aa).

Positions 13-42 are disordered; the sequence is LASYASDPSKTRGRRHSEPPPENRTEFQRD. Basic and acidic residues predominate over residues 28-42; it reads HSEPPPENRTEFQRD. An HD domain is found at 73–208; sequence RLTHSLEVAQ…ANLADEVAYN (136 aa).

This sequence belongs to the dGTPase family. Type 2 subfamily.

The protein is Deoxyguanosinetriphosphate triphosphohydrolase-like protein of Bordetella bronchiseptica (strain ATCC BAA-588 / NCTC 13252 / RB50) (Alcaligenes bronchisepticus).